The following is a 173-amino-acid chain: Crossover junction endodeoxyribonuclease RuvC (173 aa).

Catalysis depends on residues Asp-8, Glu-67, and Asp-139. Residues Asp-8, Glu-67, and Asp-139 each contribute to the Mg(2+) site.

The protein belongs to the RuvC family. In terms of assembly, homodimer which binds Holliday junction (HJ) DNA. The HJ becomes 2-fold symmetrical on binding to RuvC with unstacked arms; it has a different conformation from HJ DNA in complex with RuvA. In the full resolvosome a probable DNA-RuvA(4)-RuvB(12)-RuvC(2) complex forms which resolves the HJ. The cofactor is Mg(2+).

Its subcellular location is the cytoplasm. The enzyme catalyses Endonucleolytic cleavage at a junction such as a reciprocal single-stranded crossover between two homologous DNA duplexes (Holliday junction).. Functionally, the RuvA-RuvB-RuvC complex processes Holliday junction (HJ) DNA during genetic recombination and DNA repair. Endonuclease that resolves HJ intermediates. Cleaves cruciform DNA by making single-stranded nicks across the HJ at symmetrical positions within the homologous arms, yielding a 5'-phosphate and a 3'-hydroxyl group; requires a central core of homology in the junction. The consensus cleavage sequence is 5'-(A/T)TT(C/G)-3'. Cleavage occurs on the 3'-side of the TT dinucleotide at the point of strand exchange. HJ branch migration catalyzed by RuvA-RuvB allows RuvC to scan DNA until it finds its consensus sequence, where it cleaves and resolves the cruciform DNA. This is Crossover junction endodeoxyribonuclease RuvC from Baumannia cicadellinicola subsp. Homalodisca coagulata.